Reading from the N-terminus, the 418-residue chain is Inner capsid protein sigma-2 (418 aa).

This sequence belongs to the orthoreovirus sigma-1 protein family. Interacts with protein mu-NS; in viral inclusions.

It localises to the virion. In terms of biological role, inner capsid (core) component. The sequence is that of Inner capsid protein sigma-2 (S2) from Reovirus type 3 (strain Dearing) (T3D).